The primary structure comprises 317 residues: Glucokinase (317 aa).

It belongs to the ROK (NagC/XylR) family. Homodimer. The cofactor is a divalent metal cation.

The catalysed reaction is D-glucose + ATP = D-glucose 6-phosphate + ADP + H(+). In terms of biological role, catalyzes the phosphorylation of D-glucose to D-glucose 6-phosphate using ATP as the phosphate donor. Can also phosphorylate 2-deoxyglucose, with lower efficiency. ITP can also serve as a phosphoryl donor. The polypeptide is Glucokinase (Thermotoga maritima (strain ATCC 43589 / DSM 3109 / JCM 10099 / NBRC 100826 / MSB8)).